Reading from the N-terminus, the 237-residue chain is Uridylate kinase (237 aa).

ATP is bound at residue 10 to 13; the sequence is KLSG. UMP is bound at residue glycine 51. Residues glycine 52 and arginine 56 each coordinate ATP. UMP contacts are provided by residues aspartate 71 and 132–139; that span reads MGMPFFST. Positions 160, 166, and 169 each coordinate ATP.

This sequence belongs to the UMP kinase family. Homohexamer.

It localises to the cytoplasm. The enzyme catalyses UMP + ATP = UDP + ADP. It participates in pyrimidine metabolism; CTP biosynthesis via de novo pathway; UDP from UMP (UMPK route): step 1/1. Its activity is regulated as follows. Inhibited by UTP. Catalyzes the reversible phosphorylation of UMP to UDP. The sequence is that of Uridylate kinase from Nocardioides sp. (strain ATCC BAA-499 / JS614).